The sequence spans 443 residues: MRNIVYFILTLFSLTSYALETINIEHGRVDPTPIAVNKFNADSSNNDLVGRDVVKVISNDLKISGLFRPISSASFIEEQTGIKYKPLFAAWRQINASLLVNGEVKTLENGKLKISFILWDTFLEKQLTGALFEVPTKLWRRAAHKIADKIYEKITGDPGYFDTKIVYVSESTVLPKIKRIALMDYDGANNKYLTNGKSLVLTPRFAHSADKIFYVSYATKSRALVYEKDLKTGKESVVGDFVGISFAPRFSPDGKKAVMSIAKNGSTHIYEIDLATKQLNKLTNGFGINTSPSYSPDGKKIVFNSDKNGVPQLYIMNSDGSDVQRISFGVGSYASPSWSPRGDYIAFTKIIRQDGEKTFNIGIMKAYPQDHGNSERIITSGYLVDSPCWSPNGRVIMFSKGWPSKANAPGKNKIFTIDLTGHNEREIITPADASDPEWSGILN.

Residues 1–18 (MRNIVYFILTLFSLTSYA) form the signal peptide.

Belongs to the TolB family. In terms of assembly, the Tol-Pal system is composed of five core proteins: the inner membrane proteins TolA, TolQ and TolR, the periplasmic protein TolB and the outer membrane protein Pal. They form a network linking the inner and outer membranes and the peptidoglycan layer.

Its subcellular location is the periplasm. Functionally, part of the Tol-Pal system, which plays a role in outer membrane invagination during cell division and is important for maintaining outer membrane integrity. The protein is Tol-Pal system protein TolB of Rickettsia prowazekii (strain Madrid E).